Consider the following 1857-residue polypeptide: Vacuolar membrane-associated protein IML1 (1857 aa).

Disordered regions lie at residues 1-55, 639-690, 724-777, 799-818, and 833-943; these read MLQS…PSKR, SNIS…PKSF, FHLH…PFGQ, TQPP…PKLP, and LGSA…PRHD. Polar residues-rich tracts occupy residues 45–55, 639–652, and 667–679; these read PQYSPKSPSKR, SNIS…TSSR, and IGNS…SYRS. The span at 726–739 shows a compositional bias: basic residues; sequence LHPKQKRPRRRSKA. Residues 741 to 757 show a composition bias toward basic and acidic residues; that stretch reads QAAETETSRPSQHETPK. Residues 868–885 are compositionally biased toward polar residues; sequence EASNTVTPRQNSPLNSGA. One can recognise a DEP domain in the interval 1338 to 1413; that stretch reads GEKGVRMMDR…DGNYFYQIAD (76 aa). Disordered regions lie at residues 1426 to 1496 and 1711 to 1730; these read WFQP…DPRK and VARP…PPYI. The span at 1454 to 1465 shows a compositional bias: basic and acidic residues; that stretch reads ARAEKSIDETGS. Low complexity-rich tracts occupy residues 1469–1483 and 1719–1730; these read IPGS…PSIS and DSSIPSASPPYI.

The protein belongs to the IML1 family.

It localises to the vacuole membrane. This chain is Vacuolar membrane-associated protein IML1 (IML1), found in Coccidioides immitis (strain RS) (Valley fever fungus).